A 352-amino-acid polypeptide reads, in one-letter code: Nicotinate-nucleotide--dimethylbenzimidazole phosphoribosyltransferase (352 aa).

Glutamate 318 (proton acceptor) is an active-site residue.

This sequence belongs to the CobT family.

It carries out the reaction 5,6-dimethylbenzimidazole + nicotinate beta-D-ribonucleotide = alpha-ribazole 5'-phosphate + nicotinate + H(+). It participates in nucleoside biosynthesis; alpha-ribazole biosynthesis; alpha-ribazole from 5,6-dimethylbenzimidazole: step 1/2. In terms of biological role, catalyzes the synthesis of alpha-ribazole-5'-phosphate from nicotinate mononucleotide (NAMN) and 5,6-dimethylbenzimidazole (DMB). In Dehalococcoides mccartyi (strain ATCC BAA-2100 / JCM 16839 / KCTC 5957 / BAV1), this protein is Nicotinate-nucleotide--dimethylbenzimidazole phosphoribosyltransferase.